A 443-amino-acid polypeptide reads, in one-letter code: Trihelix transcription factor ASIL2 (443 aa).

The segment at 1 to 82 is disordered; sequence MEDDEDIRSQ…RPTGGGGRED (82 aa). A compositionally biased stretch (polar residues) spans 38-48; sequence YSLTPPGNSSQ. A compositionally biased stretch (gly residues) spans 64–78; it reads SGGGNNSSGRPTGGG. The Myb-like domain occupies 84-144; sequence WSEAATAVLI…QCKNRIDTVK (61 aa). 2 disordered regions span residues 238-350 and 413-443; these read FGGS…GNKW and RRMGNTSNDHHHSRKNNINAIVNNNNDLGNN. The segment covering 239–249 has biased composition (gly residues); sequence GGSGGGGGGGS. The span at 271-286 shows a compositional bias: low complexity; it reads TLPQQGRTLPQQQQQG. The Bipartite nuclear localization signal motif lies at 290–303; sequence KRCSESKRWRFRKR. Residues 333–350 are compositionally biased toward basic and acidic residues; the sequence is MKTEEKKKQDGDGVGNKW. A coiled-coil region spans residues 360-414; sequence FGEAYEQTENAKLQQVVEMEKERMKFLKELELQRMQFFVKTQLEISQLKQQHGRR. The segment covering 428 to 443 has biased composition (low complexity); the sequence is NNINAIVNNNNDLGNN.

It localises to the nucleus. Functionally, transcription regulator that may repress the maturation program during early embryogenesis. The protein is Trihelix transcription factor ASIL2 of Arabidopsis thaliana (Mouse-ear cress).